A 340-amino-acid chain; its full sequence is N-acetyl-gamma-glutamyl-phosphate reductase (340 aa).

Cysteine 148 is a catalytic residue.

The protein belongs to the NAGSA dehydrogenase family. Type 1 subfamily.

The protein localises to the cytoplasm. It catalyses the reaction N-acetyl-L-glutamate 5-semialdehyde + phosphate + NADP(+) = N-acetyl-L-glutamyl 5-phosphate + NADPH + H(+). Its pathway is amino-acid biosynthesis; L-arginine biosynthesis; N(2)-acetyl-L-ornithine from L-glutamate: step 3/4. Its function is as follows. Catalyzes the NADPH-dependent reduction of N-acetyl-5-glutamyl phosphate to yield N-acetyl-L-glutamate 5-semialdehyde. In Methanosarcina mazei (strain ATCC BAA-159 / DSM 3647 / Goe1 / Go1 / JCM 11833 / OCM 88) (Methanosarcina frisia), this protein is N-acetyl-gamma-glutamyl-phosphate reductase.